Consider the following 74-residue polypeptide: Tau-AnmTx Ueq 12-1 (74 aa).

An N-terminal signal peptide occupies residues 1 to 18 (MCLLMLVLGAMYVQGWHS). Residues 19–27 (AGFGKRTLK) constitute a propeptide, removed in mature form. Cystine bridges form between cysteine 30/cysteine 37, cysteine 40/cysteine 71, cysteine 46/cysteine 64, cysteine 51/cysteine 72, and cysteine 58/cysteine 73.

Belongs to the Cnidaria small cysteine-rich protein (SCRiP) family. In terms of tissue distribution, detected in mucus secreted from ectoderm.

The protein localises to the secreted. Its function is as follows. Potentiates activation of mammalian TRPA1, a non-selective cation channel involved in perception of pain, in vitro yet has an analgesic and anti-inflammatory effect in vivo. Has antibacterial activity against C.glutamicum (MIC=50 uM) and, to a lesser extent, against S.aureus but not against P.aeruginosa or E.coli. In Urticina eques (Sea anemone), this protein is Tau-AnmTx Ueq 12-1.